A 302-amino-acid polypeptide reads, in one-letter code: 4-hydroxy-tetrahydrodipicolinate synthase (302 aa).

Thr55 contacts pyruvate. Catalysis depends on Tyr143, which acts as the Proton donor/acceptor. The active-site Schiff-base intermediate with substrate is the Lys171. Ile213 is a pyruvate binding site.

This sequence belongs to the DapA family. As to quaternary structure, homotetramer; dimer of dimers.

The protein resides in the cytoplasm. The enzyme catalyses L-aspartate 4-semialdehyde + pyruvate = (2S,4S)-4-hydroxy-2,3,4,5-tetrahydrodipicolinate + H2O + H(+). It participates in amino-acid biosynthesis; L-lysine biosynthesis via DAP pathway; (S)-tetrahydrodipicolinate from L-aspartate: step 3/4. Catalyzes the condensation of (S)-aspartate-beta-semialdehyde [(S)-ASA] and pyruvate to 4-hydroxy-tetrahydrodipicolinate (HTPA). In Psychrobacter sp. (strain PRwf-1), this protein is 4-hydroxy-tetrahydrodipicolinate synthase.